Here is a 152-residue protein sequence, read N- to C-terminus: MHCPFCSTEETKVIDSRLVSEGYQVRRRRECTNCHERFTTFETAELVIPKIVKTDGYREPFNEDKLRRSIQQAVGKRPVSEDDVEKSISCIIHKLQTTGEREVPSKLVGDLVMDELKKLDKVAYIRFASVYLSFENINEFTKEIEKLKKSQK.

The segment at 3–34 is a zinc-finger region; that stretch reads CPFCSTEETKVIDSRLVSEGYQVRRRRECTNC. Positions 49 to 139 constitute an ATP-cone domain; that stretch reads PKIVKTDGYR…VYLSFENINE (91 aa).

It belongs to the NrdR family. Requires Zn(2+) as cofactor.

Its function is as follows. Negatively regulates transcription of bacterial ribonucleotide reductase nrd genes and operons by binding to NrdR-boxes. This chain is Transcriptional repressor NrdR, found in Actinobacillus succinogenes (strain ATCC 55618 / DSM 22257 / CCUG 43843 / 130Z).